Reading from the N-terminus, the 156-residue chain is Probable low-salt glycan biosynthesis epimerase Agl13 (156 aa).

Substrate is bound by residues R19, E24, 39 to 41 (MSY), R51, H54, and H109.

The protein belongs to the dTDP-4-dehydrorhamnose 3,5-epimerase family.

Its pathway is protein modification; protein glycosylation. It functions in the pathway cell surface structure biogenesis; S-layer biogenesis. Its function is as follows. Epimerase involved in N-glycan biosynthetic pathway that takes place under low-salt conditions (1.75 M instead of 3.4 M). Participates in the formation of the tetrasaccharide present at 'Asn-532' of S-layer glycoprotein Csg, consisting of a sulfated hexose, 2 hexoses and rhamnose. Involved in the addition of final rhamnose (sugar 4) of the tetrasaccharide on the dolichol phosphate carrier. The chain is Probable low-salt glycan biosynthesis epimerase Agl13 (agl13) from Haloferax volcanii (strain ATCC 29605 / DSM 3757 / JCM 8879 / NBRC 14742 / NCIMB 2012 / VKM B-1768 / DS2) (Halobacterium volcanii).